Here is a 368-residue protein sequence, read N- to C-terminus: Chaperone protein DnaJ (368 aa).

The 66-residue stretch at 5–70 (DYYQVLGVPR…KKRKLYDTHG (66 aa)) folds into the J domain. The segment at 124-201 (GVERQIQIPT…CNGAGRVEDH (78 aa)) adopts a CR-type zinc-finger fold. Cys-137, Cys-140, Cys-153, Cys-156, Cys-175, Cys-178, Cys-189, and Cys-192 together coordinate Zn(2+). 4 CXXCXGXG motif repeats span residues 137 to 144 (CTHCHGSG), 153 to 160 (CGTCRGSG), 175 to 182 (CPHCGGRG), and 189 to 196 (CKVCNGAG).

It belongs to the DnaJ family. Homodimer. Zn(2+) serves as cofactor.

It is found in the cytoplasm. In terms of biological role, participates actively in the response to hyperosmotic and heat shock by preventing the aggregation of stress-denatured proteins and by disaggregating proteins, also in an autonomous, DnaK-independent fashion. Unfolded proteins bind initially to DnaJ; upon interaction with the DnaJ-bound protein, DnaK hydrolyzes its bound ATP, resulting in the formation of a stable complex. GrpE releases ADP from DnaK; ATP binding to DnaK triggers the release of the substrate protein, thus completing the reaction cycle. Several rounds of ATP-dependent interactions between DnaJ, DnaK and GrpE are required for fully efficient folding. Also involved, together with DnaK and GrpE, in the DNA replication of plasmids through activation of initiation proteins. In Xylella fastidiosa (strain 9a5c), this protein is Chaperone protein DnaJ.